The chain runs to 988 residues: Protein argonaute 10 (988 aa).

Over residues 1–11 the composition is skewed to basic and acidic residues; the sequence is MPIRQMKDSSE. Residues 1–103 form a disordered region; that stretch reads MPIRQMKDSS…PPSQTTSSAV (103 aa). Positions 41 to 57 are enriched in low complexity; sequence PVTVTTPATVTQSQASS. Basic residues predominate over residues 64–73; the sequence is NRSRRRNRGG. A PAZ domain is found at 338–451; the sequence is PVIEFVAQLL…LPMEACKIVE (114 aa). Positions 625-946 constitute a Piwi domain; sequence LLLAILPDNN…AAFRARFYLE (322 aa).

Belongs to the argonaute family. Ago subfamily. Interacts with GATA18/HAN and KNAT1/BP. Interacts with RICE1 and RICE2 that act as cofactors. In terms of tissue distribution, expressed in roots, stems, leaves, developing embryo, siliques, inflorescences, provascular tissue, shoot apical meristem (SAM) and adaxial (upper) sides of lateral organ primordia. Observed in the floral meristem, the adaxial side of sepal primordia, and the provascular tissue.

It localises to the cytoplasm. Functionally, involved in RNA-mediated post-transcriptional gene silencing (PTGS). Main component of the RNA-induced silencing complex (RISC) that binds to a short guide RNA such as a microRNA (miRNA) or small interfering RNA (siRNA). RISC uses the mature miRNA or siRNA as a guide for slicer-directed cleavage of homologous mRNAs to repress gene expression. Required for reliable formation of primary and axillary shoot apical meristems. Specifies leaf adaxial identity by repressing the miR165 and miR166 microRNAs in the embryonic shoot apex, in the shoot apical meristem (SAM) and leaf. Represses the microRNA miR398 which targets CCS1 chaperone mRNAs for translational inhibition. Acts as a negative regulator of AGO1 protein level. Like AGO1, is required for stem cell function and organ polarity. Unlike AGO1, is not subjected to small RNA-mediated repression itself. Essential for multiple processes in development. Coregulates, with GATA18/HAN, the shoot apical meristem (SAM) organization. This is Protein argonaute 10 from Arabidopsis thaliana (Mouse-ear cress).